A 472-amino-acid polypeptide reads, in one-letter code: Doublesex- and mab-3-related transcription factor 3 (472 aa).

The DM DNA-binding region spans Cys-29–Arg-76. Disordered stretches follow at residues Asp-89–Ala-128 and Glu-155–Thr-191. Residues Pro-95–Pro-123 show a composition bias toward pro residues. Basic and acidic residues predominate over residues Glu-155–Ser-179. The DMA domain occupies Arg-249–Val-284. Positions Thr-430–Ser-472 are disordered.

It belongs to the DMRT family. May homodimerize. As to expression, expressed in testis.

Its subcellular location is the nucleus. Functionally, probable transcription factor that plays a role in configuring the spinal circuits controlling stride in vertebrates. Involved in neuronal specification within specific subdivision of spinal cord neurons and in the development of a coordinated locomotor network controlling limb movements. May regulate transcription during sexual development. The chain is Doublesex- and mab-3-related transcription factor 3 (DMRT3) from Homo sapiens (Human).